The following is a 178-amino-acid chain: Interleukin-10 (178 aa).

The N-terminal stretch at M1–A18 is a signal peptide. Intrachain disulfides connect C30–C126 and C80–C132. An N-linked (GlcNAc...) asparagine glycan is attached at N134.

This sequence belongs to the IL-10 family. In terms of assembly, homodimer. Interacts with IL10RA and IL10RB. As to expression, produced by a variety of cell lines, including T-cells, macrophages, mast cells and other cell types.

Its subcellular location is the secreted. Major immune regulatory cytokine that acts on many cells of the immune system where it has profound anti-inflammatory functions, limiting excessive tissue disruption caused by inflammation. Mechanistically, IL10 binds to its heterotetrameric receptor comprising IL10RA and IL10RB leading to JAK1 and STAT2-mediated phosphorylation of STAT3. In turn, STAT3 translocates to the nucleus where it drives expression of anti-inflammatory mediators. Targets antigen-presenting cells (APCs) such as macrophages and monocytes and inhibits their release of pro-inflammatory cytokines including granulocyte-macrophage colony-stimulating factor /GM-CSF, granulocyte colony-stimulating factor/G-CSF, IL-1 alpha, IL-1 beta, IL-6, IL-8 and TNF-alpha. Also interferes with antigen presentation by reducing the expression of MHC-class II and co-stimulatory molecules, thereby inhibiting their ability to induce T cell activation. In addition, controls the inflammatory response of macrophages by reprogramming essential metabolic pathways including mTOR signaling. In Homo sapiens (Human), this protein is Interleukin-10 (IL10).